A 177-amino-acid polypeptide reads, in one-letter code: MKFFLKDGETSRALSRSESLLRRVKELGTNSQQSEISECVDEFNELASFNHLLVTVEHREWMEQHPNQSSKLRVPSRIGEMLKEIRAFLKVRVVTPMHKETASDTLNAFLEEYCRITGLAREDALREKMRKVKSVVLFHHSELLKFEVTENMFSYTELLKLNLSLRVISSQILGMAI.

As to quaternary structure, homooctamer. The eight monomers assemble into a closed ring that binds RNA.

Its subcellular location is the host cytoplasm. In terms of biological role, acts as a suppressor of RNA-mediated gene silencing, also known as post-transcriptional gene silencing (PTGS), a mechanism of plant viral defense that limits the accumulation of viral RNAs. Binds to ssRNAs and dsRNAs in vitro. Also functions as a replication enhancer. The polypeptide is RNA silencing suppressor (Beta vulgaris (Sugar beet)).